A 158-amino-acid polypeptide reads, in one-letter code: Sporulation-delaying protein SdpA (158 aa).

The protein localises to the cytoplasm. In terms of biological role, required for the maturation of SdpC to SDP. Not required for SdpC signal peptide cleavage, secretion from the cell or disulfide bond formation. This Bacillus subtilis (strain 168) protein is Sporulation-delaying protein SdpA.